The chain runs to 119 residues: Protein RALF-like 22 (119 aa).

The N-terminal stretch at 1-23 is a signal peptide; that stretch reads MTNTRAIYAVIAILAIVISAVES. A propeptide spans 24-70 (removed in mature form); sequence TGDFGDSLDFVRAGSSSLFSGCTGSIAECIAEEEEMEFDSDISRRIL. Cystine bridges form between Cys-88–Cys-98 and Cys-111–Cys-117.

This sequence belongs to the plant rapid alkalinization factor (RALF) family. Proteolytically cleaved, probably by S1P, a subtilisin-like serine protease (subtilase).

It localises to the secreted. In terms of biological role, cell signaling peptide that may regulate plant stress, growth, and development. Mediates a rapid alkalinization of extracellular space by mediating a transient increase in the cytoplasmic Ca(2+) concentration leading to a calcium-dependent signaling events through a cell surface receptor and a concomitant activation of some intracellular mitogen-activated protein kinases. This Arabidopsis thaliana (Mouse-ear cress) protein is Protein RALF-like 22 (RALFL22).